A 747-amino-acid polypeptide reads, in one-letter code: AT-rich interactive domain-containing protein 4 (747 aa).

The disordered stretch occupies residues 454-475 (PLPTRKRSEPCRESKEIENGGP). Basic and acidic residues predominate over residues 459-471 (KRSEPCRESKEIE). An ARID domain is found at 566 to 670 (VCSEEEFLRD…YLLEYEYAHD (105 aa)). The PHD-type zinc finger occupies 674-730 (GECCLICRSSTAGDWVNCGSCGEWAHFGCDRRPGLGAFKDYAKTDGLEYVCPNCSVS).

It localises to the nucleus. This chain is AT-rich interactive domain-containing protein 4 (ARID4), found in Arabidopsis thaliana (Mouse-ear cress).